An 884-amino-acid chain; its full sequence is Alanine--tRNA ligase (884 aa).

Zn(2+)-binding residues include H565, H569, C672, and H676.

It belongs to the class-II aminoacyl-tRNA synthetase family. Zn(2+) is required as a cofactor.

The protein localises to the cytoplasm. The enzyme catalyses tRNA(Ala) + L-alanine + ATP = L-alanyl-tRNA(Ala) + AMP + diphosphate. Catalyzes the attachment of alanine to tRNA(Ala) in a two-step reaction: alanine is first activated by ATP to form Ala-AMP and then transferred to the acceptor end of tRNA(Ala). Also edits incorrectly charged Ser-tRNA(Ala) and Gly-tRNA(Ala) via its editing domain. This chain is Alanine--tRNA ligase, found in Sphingopyxis alaskensis (strain DSM 13593 / LMG 18877 / RB2256) (Sphingomonas alaskensis).